A 268-amino-acid chain; its full sequence is Movement and silencing protein TGBp1 (268 aa).

The region spanning 1–138 (MEDFFNCLRS…PHHIAQAITQ (138 aa)) is the (+)RNA virus helicase ATP-binding domain. The (+)RNA virus helicase C-terminal domain occupies 139 to 268 (YTGFPIEAAG…CRPRDLPSEN (130 aa)).

It belongs to the Tymovirales TGBp1 protein family. As to quaternary structure, homodimer and homooligomer. Interacts with capsid protein. Interacts with host AGO1; this interaction targets the host protein for degradation, thereby suppressing the antiviral RNA silencing.

Its subcellular location is the host cytoplasm. In terms of biological role, transports viral genome to neighboring plant cells directly through plasmosdesmata, without any budding. The movement protein allows efficient cell to cell propagation, by bypassing the host cell wall barrier. Increases plasmodesma size exclusion limit. Acts as a suppressor of RNA-mediated gene silencing, also known as post-transcriptional gene silencing (PTGS), a mechanism of plant viral defense that limits the accumulation of viral RNAs. The chain is Movement and silencing protein TGBp1 (ORF2) from Lolium latent virus (isolate Lolium/USA/US1/-) (LoLV).